The sequence spans 568 residues: Nucleolar protein 58 (568 aa).

Residues 293–417 (IAPNLTALVG…LESRLRALEH (125 aa)) enclose the Nop domain. Residues 430–568 (ANGQQGRQQP…KKKKKKKKDE (139 aa)) are disordered. A compositionally biased stretch (basic and acidic residues) spans 471 to 482 (EEVKEEKDEKKD). The segment covering 522 to 533 (RKEAKKAAKAAK) has biased composition (basic residues). The span at 534–544 (KAAEESGDGDK) shows a compositional bias: basic and acidic residues.

It belongs to the NOP5/NOP56 family.

Its subcellular location is the nucleus. It localises to the nucleolus. In terms of biological role, required for pre-18S rRNA processing. May bind microtubules. The sequence is that of Nucleolar protein 58 (NOP58) from Cryptococcus neoformans var. neoformans serotype D (strain JEC21 / ATCC MYA-565) (Filobasidiella neoformans).